Consider the following 91-residue polypeptide: PqqA binding protein (91 aa).

Belongs to the PqqD family. As to quaternary structure, monomer. Interacts with PqqE.

Its pathway is cofactor biosynthesis; pyrroloquinoline quinone biosynthesis. Functionally, functions as a PqqA binding protein and presents PqqA to PqqE, in the pyrroloquinoline quinone (PQQ) biosynthetic pathway. This chain is PqqA binding protein, found in Pseudomonas fluorescens (strain Pf0-1).